A 424-amino-acid polypeptide reads, in one-letter code: UPF0597 protein Ssed_2537 (424 aa).

The protein belongs to the UPF0597 family.

This Shewanella sediminis (strain HAW-EB3) protein is UPF0597 protein Ssed_2537.